A 1579-amino-acid polypeptide reads, in one-letter code: Pentafunctional AROM polypeptide (1579 aa).

The segment at 1–391 (MKVELSKVPI…YGTSAHVVSD (391 aa)) is 3-dehydroquinate synthase. Residues 44 to 46 (DTN), 79 to 82 (EAHK), 110 to 112 (GGV), and Asp-115 each bind NAD(+). Arg-126 contributes to the 7-phospho-2-dehydro-3-deoxy-D-arabino-heptonate binding site. Position 135–136 (135–136 (TS)) interacts with NAD(+). Asp-142 and Lys-148 together coordinate 7-phospho-2-dehydro-3-deoxy-D-arabino-heptonate. Lys-157 serves as a coordination point for NAD(+). 7-phospho-2-dehydro-3-deoxy-D-arabino-heptonate is bound at residue Asn-158. Residues 175 to 178 (WLET) and Asn-186 each bind NAD(+). Residue Glu-190 participates in Zn(2+) binding. Residues 190 to 193 (EVIK) and Lys-257 contribute to the 7-phospho-2-dehydro-3-deoxy-D-arabino-heptonate site. Catalysis depends on Glu-267, which acts as the Proton acceptor; for 3-dehydroquinate synthase activity. 7-phospho-2-dehydro-3-deoxy-D-arabino-heptonate-binding positions include 271 to 275 (RNLLN) and His-278. His-278 is a binding site for Zn(2+). His-282 functions as the Proton acceptor; for 3-dehydroquinate synthase activity in the catalytic mechanism. 7-phospho-2-dehydro-3-deoxy-D-arabino-heptonate is bound by residues His-294 and Lys-363. His-294 provides a ligand contact to Zn(2+). Residues 404–862 (VYPFKTLENG…WDVLHTQLGA (459 aa)) form an EPSP synthase region. Cys-844 functions as the For EPSP synthase activity in the catalytic mechanism. A shikimate kinase region spans residues 881–1070 (SIVIIGMRAA…IPTNRSSFVC (190 aa)). Residue 886 to 893 (GMRAAGKT) coordinates ATP. A 3-dehydroquinase region spans residues 1071 to 1283 (LTFDDLAAHK…SAPGQLTLSQ (213 aa)). His-1188 (proton acceptor; for 3-dehydroquinate dehydratase activity) is an active-site residue. The Schiff-base intermediate with substrate; for 3-dehydroquinate dehydratase activity role is filled by Lys-1217. Residues 1296-1579 (AKNFYVVGSP…IYSAVTEEQA (284 aa)) form a shikimate dehydrogenase region.

In the N-terminal section; belongs to the sugar phosphate cyclases superfamily. Dehydroquinate synthase family. It in the 2nd section; belongs to the EPSP synthase family. This sequence in the 3rd section; belongs to the shikimate kinase family. The protein in the 4th section; belongs to the type-I 3-dehydroquinase family. In the C-terminal section; belongs to the shikimate dehydrogenase family. In terms of assembly, homodimer. The cofactor is Zn(2+).

The protein resides in the cytoplasm. It catalyses the reaction 7-phospho-2-dehydro-3-deoxy-D-arabino-heptonate = 3-dehydroquinate + phosphate. The enzyme catalyses 3-dehydroquinate = 3-dehydroshikimate + H2O. The catalysed reaction is shikimate + NADP(+) = 3-dehydroshikimate + NADPH + H(+). It carries out the reaction shikimate + ATP = 3-phosphoshikimate + ADP + H(+). It catalyses the reaction 3-phosphoshikimate + phosphoenolpyruvate = 5-O-(1-carboxyvinyl)-3-phosphoshikimate + phosphate. Its pathway is metabolic intermediate biosynthesis; chorismate biosynthesis; chorismate from D-erythrose 4-phosphate and phosphoenolpyruvate: step 2/7. It functions in the pathway metabolic intermediate biosynthesis; chorismate biosynthesis; chorismate from D-erythrose 4-phosphate and phosphoenolpyruvate: step 3/7. It participates in metabolic intermediate biosynthesis; chorismate biosynthesis; chorismate from D-erythrose 4-phosphate and phosphoenolpyruvate: step 4/7. The protein operates within metabolic intermediate biosynthesis; chorismate biosynthesis; chorismate from D-erythrose 4-phosphate and phosphoenolpyruvate: step 5/7. Its pathway is metabolic intermediate biosynthesis; chorismate biosynthesis; chorismate from D-erythrose 4-phosphate and phosphoenolpyruvate: step 6/7. The AROM polypeptide catalyzes 5 consecutive enzymatic reactions in prechorismate polyaromatic amino acid biosynthesis. The polypeptide is Pentafunctional AROM polypeptide (Lachancea thermotolerans (strain ATCC 56472 / CBS 6340 / NRRL Y-8284) (Yeast)).